The chain runs to 341 residues: MSVYTTAQLLAVNEKKFKFDPLFLRIFFRETYPFSTEKVYLSQIPGLVNMALYVSPIVSGKVIRSRGGSTSEFTPGYVKPKHEVNPLMMTLRLPDEDPQNVADPVYRRRRIILQNMKDEELAIAQVEEKQAVSAVLSGKYTMTGEAFEPVEVDMGRSAGNNIVQAGAAAWSTRDKETYDPTDDIEAYALNARGVVNIIVFDPKGWALFRSFKAVEKKLDTRRGSNSELETAVKDLGMAVSYKGMFGDVAIVVYSGQYVENDVKKNYLPDLTMVLGNTQARGLRTYGCILDADAQREGIDASTRYPKNWVQLGDPVREFTMIQSAPLMLLPDPDAFVSVKLA.

A coiled-coil region spans residues 109–129 (RRIILQNMKDEELAIAQVEEK).

This sequence belongs to the lambda phage major capsid protein family. As to quaternary structure, homomultimer.

Its subcellular location is the virion. The protein resides in the host cytoplasm. In terms of biological role, assembles to form an icosahedral capsid with a T=7 symmetry. The icosahedral capsid is about 60 nm in diameter and composed of 415 major capsid proteins. The assembly is primed by the interaction between capsid assembly protease and portal dodecamer, and major capsid proteins assemble cooperatively to form the procapsid with the help of capsid scaffolding protein. Major capsid protein forms hexons and pentons of the icosahedron. Viral genomic DNA is packaged into the procapsid through the portal vertex. The packaging triggers a dramatic reconfiguration of the capsid shell. The chain is Major capsid protein (E) from Enterobacteria phage phi80 (Bacteriophage phi-80).